The chain runs to 451 residues: Interferon-related developmental regulator 1 (451 aa).

Over residues 1-10 (MPKNKKRNTP) the composition is skewed to basic residues. Residues 1 to 69 (MPKNKKRNTP…PSSFAEDGPE (69 aa)) are disordered. Residues 23 to 33 (AAAATAATAGG) show a composition bias toward low complexity. Positions 49-61 (ETMSHCSGYSDPS) are enriched in polar residues.

It belongs to the IFRD family. Interacts with PSIP1/LEDGF. Expressed in a variety of tissues.

In terms of biological role, could play a role in regulating gene activity in the proliferative and/or differentiative pathways induced by NGF. May be an autocrine factor that attenuates or amplifies the initial ligand-induced signal. In Homo sapiens (Human), this protein is Interferon-related developmental regulator 1 (IFRD1).